The chain runs to 610 residues: Prolactin receptor (610 aa).

A signal peptide spans 1–19 (MPSALAFVLLVLNISLLKG). The Extracellular portion of the chain corresponds to 20–229 (QSPPGKPEIH…EMPNDFTLKD (210 aa)). 2 Fibronectin type-III domains span residues 22–122 (PPGK…IVEP) and 124–224 (PPRN…MPND). Cysteine 31 and cysteine 41 are oxidised to a cystine. Asparagine 54 carries an N-linked (GlcNAc...) asparagine glycan. Cysteine 70 and cysteine 81 form a disulfide bridge. Residues asparagine 99 and asparagine 127 are each glycosylated (N-linked (GlcNAc...) asparagine). The Zn(2+) site is built by aspartate 206 and histidine 207. Positions 210–214 (WSRWS) match the WSXWS motif motif. The chain crosses the membrane as a helical span at residues 230 to 253 (TTVWIIVAILSAVICLIMVWAVAL). The Cytoplasmic portion of the chain corresponds to 254-610 (KGYSMMTCIF…DPTCFMHSFH (357 aa)). The Box 1 motif motif lies at 262–270 (IFPPVPGPK). Disordered regions lie at residues 317–355 (DERL…HSLL), 458–482 (TGEE…TPWP), and 564–584 (AKKA…ASFT). A compositionally biased stretch (basic and acidic residues) spans 318–327 (ERLMPSHSKE). Residues 345 to 354 (GHGSYDSHSL) are compositionally biased toward low complexity.

This sequence belongs to the type I cytokine receptor family. Type 1 subfamily. In terms of assembly, interacts with SMARCA1. Interacts with NEK3 and VAV2 and this interaction is prolactin-dependent.

Its subcellular location is the membrane. Its function is as follows. This is a receptor for the anterior pituitary hormone prolactin. This is Prolactin receptor (Prlr) from Rattus norvegicus (Rat).